The sequence spans 186 residues: dCTP deaminase, dUMP-forming (186 aa).

DCTP contacts are provided by residues 101–106 (RSSLGR), Asp119, 127–129 (TLE), Gln148, Tyr162, and Gln171. Glu129 serves as the catalytic Proton donor/acceptor.

It belongs to the dCTP deaminase family. Homotrimer.

It carries out the reaction dCTP + 2 H2O = dUMP + NH4(+) + diphosphate. The protein operates within pyrimidine metabolism; dUMP biosynthesis; dUMP from dCTP: step 1/1. Bifunctional enzyme that catalyzes both the deamination of dCTP to dUTP and the hydrolysis of dUTP to dUMP without releasing the toxic dUTP intermediate. This chain is dCTP deaminase, dUMP-forming, found in Coprothermobacter proteolyticus (strain ATCC 35245 / DSM 5265 / OCM 4 / BT).